We begin with the raw amino-acid sequence, 324 residues long: COP9 signalosome complex subunit 6 (324 aa).

The MPN domain occupies 38–171 (VALHPLVILN…VSVFESVIDI (134 aa)).

Belongs to the peptidase M67A family. CSN6 subfamily. Component of the CSN complex, composed of COPS1/GPS1, COPS2, COPS3, COPS4, COPS5, COPS6, COPS7 (COPS7A or COPS7B), COPS8 and COPS9. In the complex, it probably interacts directly with COPS2, COPS4, COPS5, COPS7 (COPS7A or COPS7B) and COPS9. Interacts with the translation initiation factor EIF3S6. Interacts weakly with RBX1. Directly interacts with COP1 and 14-3-3 protein sigma/SFN. Interacts with ERCC6.

It is found in the cytoplasm. It localises to the nucleus. Functionally, component of the COP9 signalosome complex (CSN), a complex involved in various cellular and developmental processes. The CSN complex is an essential regulator of the ubiquitin (Ubl) conjugation pathway by mediating the deneddylation of the cullin subunits of SCF-type E3 ligase complexes, leading to decrease the Ubl ligase activity of SCF-type complexes such as SCF, CSA or DDB2. The complex is also involved in phosphorylation of p53/TP53, c-jun/JUN, IkappaBalpha/NFKBIA, ITPK1 and IRF8, possibly via its association with CK2 and PKD kinases. CSN-dependent phosphorylation of TP53 and JUN promotes and protects degradation by the Ubl system, respectively. Has some glucocorticoid receptor-responsive activity. Stabilizes COP1 through reducing COP1 auto-ubiquitination and decelerating COP1 turnover rate, hence regulates the ubiquitination of COP1 targets, including SFN. This Bos taurus (Bovine) protein is COP9 signalosome complex subunit 6 (COPS6).